We begin with the raw amino-acid sequence, 146 residues long: D-aminoacyl-tRNA deacylase (146 aa).

Positions glycine 137 to proline 138 match the Gly-cisPro motif, important for rejection of L-amino acids motif.

Belongs to the DTD family. As to quaternary structure, homodimer.

Its subcellular location is the cytoplasm. It catalyses the reaction glycyl-tRNA(Ala) + H2O = tRNA(Ala) + glycine + H(+). It carries out the reaction a D-aminoacyl-tRNA + H2O = a tRNA + a D-alpha-amino acid + H(+). Its function is as follows. An aminoacyl-tRNA editing enzyme that deacylates mischarged D-aminoacyl-tRNAs. Also deacylates mischarged glycyl-tRNA(Ala), protecting cells against glycine mischarging by AlaRS. Acts via tRNA-based rather than protein-based catalysis; rejects L-amino acids rather than detecting D-amino acids in the active site. By recycling D-aminoacyl-tRNA to D-amino acids and free tRNA molecules, this enzyme counteracts the toxicity associated with the formation of D-aminoacyl-tRNA entities in vivo and helps enforce protein L-homochirality. The chain is D-aminoacyl-tRNA deacylase from Hahella chejuensis (strain KCTC 2396).